We begin with the raw amino-acid sequence, 624 residues long: tRNA uridine 5-carboxymethylaminomethyl modification enzyme MnmG (624 aa).

FAD-binding positions include 13–18 (GGGHAG), valine 125, and serine 180. 273–287 (GPRYCPSIEDKIVRF) lines the NAD(+) pocket. Glutamine 370 is an FAD binding site.

The protein belongs to the MnmG family. In terms of assembly, homodimer. Heterotetramer of two MnmE and two MnmG subunits. Requires FAD as cofactor.

It localises to the cytoplasm. Its function is as follows. NAD-binding protein involved in the addition of a carboxymethylaminomethyl (cmnm) group at the wobble position (U34) of certain tRNAs, forming tRNA-cmnm(5)s(2)U34. In Legionella pneumophila (strain Lens), this protein is tRNA uridine 5-carboxymethylaminomethyl modification enzyme MnmG.